Here is a 174-residue protein sequence, read N- to C-terminus: uncharacterized protein (174 aa).

The protein belongs to the NAD(P)H dehydrogenase (quinone) family.

This is an uncharacterized protein from Bacillus subtilis (strain 168).